Reading from the N-terminus, the 29-residue chain is Photosystem I reaction center subunit XII (29 aa).

Residues 7–26 (IFVALILALFSFVLAIRLGT) form a helical membrane-spanning segment.

It belongs to the PsaM family.

It is found in the plastid. The protein resides in the chloroplast thylakoid membrane. The protein is Photosystem I reaction center subunit XII of Guillardia theta (Cryptophyte).